Reading from the N-terminus, the 78-residue chain is Pigment-dispersing hormone 2 peptides (78 aa).

The N-terminal stretch at 1-21 is a signal peptide; the sequence is MRSGVFVAVLVVVVFALLTQG. Residue A75 is modified to Alanine amide.

This sequence belongs to the arthropod PDH family. Eyestalk sinus gland.

The protein resides in the secreted. The pigment-dispersing hormone causes the migration of the distal retinal pigment into the proximal end of the pigment chromatophore cells and thus decreases the amount of light entering the retinulas. May also function as a neurotransmitter and/or neuromodulator. This Callinectes sapidus (Blue crab) protein is Pigment-dispersing hormone 2 peptides (PDH2).